The chain runs to 886 residues: Protein translocase subunit SecA (886 aa).

ATP-binding positions include Gln85, 103 to 107 (GEGKT), and Asp492. A compositionally biased stretch (basic and acidic residues) spans 841-864 (RVVENRYAEEGPKQPARRENKVGR). Residues 841 to 866 (RVVENRYAEEGPKQPARRENKVGRND) form a disordered region. 4 residues coordinate Zn(2+): Cys868, Cys870, Cys879, and Cys880.

Belongs to the SecA family. As to quaternary structure, monomer and homodimer. Part of the essential Sec protein translocation apparatus which comprises SecA, SecYEG and auxiliary proteins SecDF. Other proteins may also be involved. It depends on Zn(2+) as a cofactor.

Its subcellular location is the cell membrane. It localises to the cytoplasm. It carries out the reaction ATP + H2O + cellular proteinSide 1 = ADP + phosphate + cellular proteinSide 2.. Its function is as follows. Part of the Sec protein translocase complex. Interacts with the SecYEG preprotein conducting channel. Has a central role in coupling the hydrolysis of ATP to the transfer of proteins into and across the cell membrane, serving as an ATP-driven molecular motor driving the stepwise translocation of polypeptide chains across the membrane. In Pelotomaculum thermopropionicum (strain DSM 13744 / JCM 10971 / SI), this protein is Protein translocase subunit SecA.